The following is a 63-amino-acid chain: Large ribosomal subunit protein bL28 (63 aa).

The protein belongs to the bacterial ribosomal protein bL28 family.

This is Large ribosomal subunit protein bL28 from Mycoplasmopsis synoviae (strain 53) (Mycoplasma synoviae).